Consider the following 28-residue polypeptide: Omega-agatoxin-Aa2a (28 aa).

The protein belongs to the neurotoxin 04 (omega-agtx) family. 03 (type II/III omega-agtx) subfamily. As to expression, expressed by the venom gland.

Its subcellular location is the secreted. Omega-agatoxin are antagonist of voltage-gated calcium channels. They block insect neuromuscular transmission presynaptically. Potent blocker of N-type calcium channels (Cav2.2/CACNA1B). The protein is Omega-agatoxin-Aa2a of Agelenopsis aperta (North American funnel-web spider).